The chain runs to 3214 residues: Ciliogenesis and planar polarity effector 1 (3214 aa).

A run of 2 helical transmembrane segments spans residues 593-613 (KLML…LQFI) and 632-652 (AWVL…YWDM). Disordered stretches follow at residues 1496 to 1523 (VGKK…ETPG), 1644 to 1667 (GNQS…PLQS), 1879 to 1991 (DGRH…HRAQ), 2047 to 2142 (FGES…FPPA), 2214 to 2241 (SLSD…SSHC), 2398 to 2440 (GITQ…ISND), 2491 to 2529 (GSHD…GHEP), 2622 to 2650 (TFQS…QSGE), 2824 to 2855 (VSLQ…HSSQ), 3037 to 3127 (TAPA…CRED), and 3158 to 3181 (MSPA…VSES). Over residues 1512–1523 (NSQRKEDDETPG) the composition is skewed to basic and acidic residues. The span at 1932–1942 (QCSRKEPRDAS) shows a compositional bias: basic and acidic residues. Polar residues-rich tracts occupy residues 1943–1953 (VDTNLTEQKGA), 1971–1984 (NGAQ…QKTQ), and 2047–2068 (FGES…SRQR). A compositionally biased stretch (basic and acidic residues) spans 2079 to 2099 (CTREPGKNSPADHKRISRPDQ). Polar residues predominate over residues 2215 to 2241 (LSDSCQPPVSQRTVHTTLPSPSDSSHC). The span at 2500–2514 (DPDKEGPSQKADSES) shows a compositional bias: basic and acidic residues. Composition is skewed to polar residues over residues 2515–2524 (SKNPQATAAS) and 2622–2634 (TFQS…STRG). Residues 2830-2848 (EDVEEQKDAEETSETEFSE) show a composition bias toward acidic residues. Polar residues predominate over residues 3090-3107 (RGSSQLRGSQPPCQSQKP).

In terms of assembly, interacts with FUZ; INTU and WDPCP; the interactors are proposed to form the core CPLANE (ciliogenesis and planar polarity effectors) complex.

It localises to the membrane. Its subcellular location is the cell projection. It is found in the cilium. In terms of biological role, involved in ciliogenesis. Involved in the establishment of cell polarity required for directional cell migration. Proposed to act in association with the CPLANE (ciliogenesis and planar polarity effectors) complex. Involved in recruitment of peripheral IFT-A proteins to basal bodies. This chain is Ciliogenesis and planar polarity effector 1, found in Mus musculus (Mouse).